The following is a 225-amino-acid chain: Uracil-DNA glycosylase (225 aa).

The Proton acceptor role is filled by Asp-65.

The protein belongs to the uracil-DNA glycosylase (UDG) superfamily. UNG family.

It is found in the cytoplasm. The enzyme catalyses Hydrolyzes single-stranded DNA or mismatched double-stranded DNA and polynucleotides, releasing free uracil.. Functionally, excises uracil residues from the DNA which can arise as a result of misincorporation of dUMP residues by DNA polymerase or due to deamination of cytosine. This is Uracil-DNA glycosylase from Clostridium perfringens (strain SM101 / Type A).